Here is a 549-residue protein sequence, read N- to C-terminus: Coiled-coil domain-containing protein 102A (549 aa).

3 disordered regions span residues 1-61 (MSHG…TAPA), 135-195 (LAGA…GSQE), and 207-248 (PEEP…EEDA). 3 positions are modified to phosphoserine: serine 12, serine 26, and serine 28. Pro residues predominate over residues 37–55 (SLPPTPPSGTPSPGPPPSL). Positions 69 to 160 (ESREELRLRE…ARGRELARLR (92 aa)) form a coiled coil. Composition is skewed to basic and acidic residues over residues 135-158 (LAGA…ELAR) and 165-187 (AADK…DIGA). Coiled coils occupy residues 263 to 398 (KVLL…NASA) and 426 to 517 (KLKK…NAPL). Disordered stretches follow at residues 472 to 496 (ELDE…QSEN) and 509 to 549 (RRQQ…IQVA). Positions 530-549 (EAGDGASDLDEDEDLQIQVA) are enriched in acidic residues. Serine 536 is subject to Phosphoserine.

In Mus musculus (Mouse), this protein is Coiled-coil domain-containing protein 102A (Ccdc102a).